Here is a 22-residue protein sequence, read N- to C-terminus: SNKKNYQKEIVDKHNALRRSVK.

The segment covering 1-15 (SNKKNYQKEIVDKHN) has biased composition (basic and acidic residues). The disordered stretch occupies residues 1 to 22 (SNKKNYQKEIVDKHNALRRSVK).

This sequence belongs to the CRISP family. Contains 8 disulfide bonds. Expressed by the venom gland.

The protein localises to the secreted. This chain is Cysteine-rich venom protein collettin-a, found in Pseudechis colletti (Collett's snake).